The primary structure comprises 176 residues: Protein tyrosine phosphatase PRL-1 (176 aa).

In terms of domain architecture, Tyrosine-protein phosphatase spans 13–165; it reads GESDAVVFRF…YKPRHQEGNE (153 aa). Residues C52 and C107 are joined by a disulfide bond. The Proton donor role is filled by D75. C107 functions as the Phosphocysteine intermediate in the catalytic mechanism. Residue 109–113 coordinates substrate; it reads AGLGR. Cysteine methyl ester is present on C173. A lipid anchor (S-farnesyl cysteine) is attached at C173. A propeptide spans 174 to 176 (removed in mature form); it reads AVM.

This sequence belongs to the protein-tyrosine phosphatase family.

Its subcellular location is the flagellar pocket. It catalyses the reaction O-phospho-L-tyrosyl-[protein] + H2O = L-tyrosyl-[protein] + phosphate. Its activity is regulated as follows. Activated in a reduced environment which promotes the reduction of the disulfide bond between the regulatory Cys-52 and the catalytic Cys-107 residues. Inhibited by sodium orthovanadate. Functionally, has protein tyrosine phosphatase activity. This is Protein tyrosine phosphatase PRL-1 from Trypanosoma cruzi (strain CL Brener).